A 1011-amino-acid chain; its full sequence is Lysosomal alpha-mannosidase (1011 aa).

Residues M1–A49 form the signal peptide. 2 disulfide bridges follow: C55–C358 and C268–C273. H72 and D74 together coordinate Zn(2+). N133 carries N-linked (GlcNAc...) asparagine glycosylation. Position 196 (D196) interacts with Zn(2+). The active-site Nucleophile is the D196. Residues N310 and N367 are each glycosylated (N-linked (GlcNAc...) asparagine). 2 disulfide bridges follow: C412-C472 and C493-C501. Zn(2+) is bound at residue H446. 8 N-linked (GlcNAc...) asparagine glycosylation sites follow: N497, N645, N651, N692, N766, N832, N930, and N989.

Belongs to the glycosyl hydrolase 38 family. The cofactor is Zn(2+). In terms of processing, first processed into 3 peptides of 70 kDa, 42 kDa (D) and 13/15 kDa (E). The 70 kDa peptide is further processed into three peptides (A, B and C). The A, B and C peptides are disulfide-linked. Post-translationally, heavily glycosylated.

The protein localises to the lysosome. The enzyme catalyses Hydrolysis of terminal, non-reducing alpha-D-mannose residues in alpha-D-mannosides.. Functionally, necessary for the catabolism of N-linked carbohydrates released during glycoprotein turnover. Cleaves all known types of alpha-mannosidic linkages. This chain is Lysosomal alpha-mannosidase (MAN2B1), found in Homo sapiens (Human).